Consider the following 201-residue polypeptide: MALKDRFDKIISYFDTDDVSENEVHEVQERTSVQRDSRAATAQEASQRSHMTNSAEEEMIGSRPRTYTYDPNRQERQRVQRDNAYQQATPRVQNKDSVRQQREQVTIALKYPRKYEDAQEIVDLLIVNECVLIDFQYMLDAQARRCLDYIDGASRVLYGSLQKVGSSMFLLTPANVMVDIEEMNIPKTGQETSFDFDMKRR.

Over residues 27 to 38 (VQERTSVQRDSR) the composition is skewed to basic and acidic residues. The tract at residues 27 to 99 (VQERTSVQRD…PRVQNKDSVR (73 aa)) is disordered. Positions 43-54 (QEASQRSHMTNS) are enriched in polar residues. The segment covering 72–81 (NRQERQRVQR) has biased composition (basic and acidic residues). The span at 83–92 (NAYQQATPRV) shows a compositional bias: polar residues.

Belongs to the SepF family. Homodimer. Interacts with FtsZ.

The protein localises to the cytoplasm. Cell division protein that is part of the divisome complex and is recruited early to the Z-ring. Probably stimulates Z-ring formation, perhaps through the cross-linking of FtsZ protofilaments. Its function overlaps with FtsA. This chain is Cell division protein SepF, found in Streptococcus agalactiae serotype V (strain ATCC BAA-611 / 2603 V/R).